The following is a 331-amino-acid chain: Pseudouridylate synthase TRUB2, mitochondrial (331 aa).

The N-terminal 10 residues, 1–10 (MGSAGLSRLH), are a transit peptide targeting the mitochondrion. The Nucleophile role is filled by aspartate 98. Residues 296–331 (KSLSPGLDTKQLPSPGWSWDSQGPSSTLGLERGAGQ) are disordered. Over residues 314 to 323 (WDSQGPSSTL) the composition is skewed to polar residues.

It belongs to the pseudouridine synthase TruB family. As to quaternary structure, forms a regulatory protein-RNA complex, consisting of RCC1L, NGRN, RPUSD3, RPUSD4, TRUB2, FASTKD2 and 16S mt-rRNA.

The protein localises to the mitochondrion matrix. The enzyme catalyses a uridine in mRNA = a pseudouridine in mRNA. The catalysed reaction is uridine(55) in tRNA = pseudouridine(55) in tRNA. Its function is as follows. Minor enzyme contributing to the isomerization of uridine to pseudouridine (pseudouridylation) of specific mitochondrial mRNAs (mt-mRNAs) such as COXI and COXIII mt-mRNAs. As a component of a functional protein-RNA module, consisting of RCC1L, NGRN, RPUSD3, RPUSD4, TRUB2, FASTKD2 and 16S mitochondrial ribosomal RNA (16S mt-rRNA), controls 16S mt-rRNA abundance and is required for intra-mitochondrial translation. Also catalyzes pseudouridylation of some tRNAs, including synthesis of pseudouridine(55) from uracil-55, in the psi GC loop of a subset of tRNAs. This is Pseudouridylate synthase TRUB2, mitochondrial from Homo sapiens (Human).